Here is a 425-residue protein sequence, read N- to C-terminus: Serine hydroxymethyltransferase (425 aa).

Residues L128 and 132-134 contribute to the (6S)-5,6,7,8-tetrahydrofolate site; that span reads GHL. Residue K237 is modified to N6-(pyridoxal phosphate)lysine.

This sequence belongs to the SHMT family. In terms of assembly, homodimer. It depends on pyridoxal 5'-phosphate as a cofactor.

It localises to the cytoplasm. The catalysed reaction is (6R)-5,10-methylene-5,6,7,8-tetrahydrofolate + glycine + H2O = (6S)-5,6,7,8-tetrahydrofolate + L-serine. The protein operates within one-carbon metabolism; tetrahydrofolate interconversion. Its pathway is amino-acid biosynthesis; glycine biosynthesis; glycine from L-serine: step 1/1. Functionally, catalyzes the reversible interconversion of serine and glycine with tetrahydrofolate (THF) serving as the one-carbon carrier. This reaction serves as the major source of one-carbon groups required for the biosynthesis of purines, thymidylate, methionine, and other important biomolecules. Also exhibits THF-independent aldolase activity toward beta-hydroxyamino acids, producing glycine and aldehydes, via a retro-aldol mechanism. This Wolbachia pipientis wMel protein is Serine hydroxymethyltransferase.